The chain runs to 94 residues: Large ribosomal subunit protein bL25 (94 aa).

The protein belongs to the bacterial ribosomal protein bL25 family. As to quaternary structure, part of the 50S ribosomal subunit; part of the 5S rRNA/L5/L18/L25 subcomplex. Contacts the 5S rRNA. Binds to the 5S rRNA independently of L5 and L18.

In terms of biological role, this is one of the proteins that binds to the 5S RNA in the ribosome where it forms part of the central protuberance. The chain is Large ribosomal subunit protein bL25 from Pectobacterium atrosepticum (strain SCRI 1043 / ATCC BAA-672) (Erwinia carotovora subsp. atroseptica).